The sequence spans 68 residues: MKLCVVIVLLMLAMPFNGGEASRFFNQHARSQRSGMKTRGIWCDPPCPEGETCRGGECSDEFNGDMGR.

The N-terminal stretch at 1–20 (MKLCVVIVLLMLAMPFNGGE) is a signal peptide. A propeptide spanning residues 21-68 (ASRFFNQHARSQRSGMKTRGIWCDPPCPEGETCRGGECSDEFNGDMGR) is cleaved from the precursor. Residue Met-66 is modified to Methionine amide.

Contains 2 disulfide bonds. In terms of tissue distribution, expressed by the venom duct.

It is found in the secreted. Functionally, probable neurotoxin with unknown target. Possibly targets ion channels. The sequence is that of Conotoxin Cal14.13b from Californiconus californicus (California cone).